We begin with the raw amino-acid sequence, 238 residues long: Ribitol-5-phosphate cytidylyltransferase 2 (238 aa).

CTP is bound by residues 7–10 (LAGG) and 81–87 (GTDRNET).

The protein belongs to the IspD/TarI cytidylyltransferase family. TarI subfamily.

It carries out the reaction D-ribitol 5-phosphate + CTP + H(+) = CDP-L-ribitol + diphosphate. The protein operates within cell wall biogenesis; poly(ribitol phosphate) teichoic acid biosynthesis. Catalyzes the transfer of the cytidylyl group of CTP to D-ribitol 5-phosphate. This Staphylococcus aureus (strain MRSA252) protein is Ribitol-5-phosphate cytidylyltransferase 2.